A 176-amino-acid chain; its full sequence is Conjugal transfer protein TraF (176 aa).

Residues 1 to 23 (MRHRRALLFLTGAAVFVSALTAA) form the signal peptide.

It belongs to the peptidase S26C family.

The protein resides in the periplasm. Involved in conjugal transfer of the plasmid. The chain is Conjugal transfer protein TraF (traF) from Agrobacterium tumefaciens (strain 15955).